Reading from the N-terminus, the 155-residue chain is Mitochondrial fission 1 protein (155 aa).

The Cytoplasmic portion of the chain corresponds to 1–131 (MTKVDFWPTL…DKIQKETLKG (131 aa)). Residues 132 to 149 (VVVAGGVLAGAVAVASFF) form a helical membrane-spanning segment. Residues 150–155 (LRNKRR) lie on the Mitochondrial intermembrane side of the membrane.

It belongs to the FIS1 family. Interacts with DNM1 and MDV1.

The protein resides in the mitochondrion outer membrane. Its function is as follows. Has a role in mitochondrial fission. Has a role in outer membrane fission but not matrix separation. Required for targeting MDV1 to the mitochondria. Regulates the assembly of DNM1 into punctate structures, in the mitochondrial tubules, promoting mitochondrial membrane constriction and/or division. This Saccharomyces cerevisiae (strain ATCC 204508 / S288c) (Baker's yeast) protein is Mitochondrial fission 1 protein (FIS1).